Here is a 48-residue protein sequence, read N- to C-terminus: uncharacterized protein (48 aa).

Residues 1–48 (MSRRMGGGMPKINLSGAIPNNNTSTPSTPTLRSSVSVSSSNSRGLFLA) form a disordered region. Positions 20-48 (NNNTSTPSTPTLRSSVSVSSSNSRGLFLA) are enriched in low complexity.

This is an uncharacterized protein from Dictyostelium discoideum (Social amoeba).